A 539-amino-acid polypeptide reads, in one-letter code: Trigger factor (539 aa).

The PPIase FKBP-type domain maps to 163–252 (GDQLTVQIET…VLDVQERLLP (90 aa)). 2 stretches are compositionally biased toward low complexity: residues 434–447 (SFEQAASPEAASEP) and 475–484 (AASPEAASEP). The segment at 434–539 (SFEQAASPEA…DVATPEARTE (106 aa)) is disordered. The span at 509-528 (TETPIVSQEENGESVENQSV) shows a compositional bias: polar residues.

It belongs to the FKBP-type PPIase family. Tig subfamily.

It localises to the cytoplasm. It catalyses the reaction [protein]-peptidylproline (omega=180) = [protein]-peptidylproline (omega=0). Its function is as follows. Involved in protein export. Acts as a chaperone by maintaining the newly synthesized protein in an open conformation. Functions as a peptidyl-prolyl cis-trans isomerase. The polypeptide is Trigger factor (Roseiflexus sp. (strain RS-1)).